We begin with the raw amino-acid sequence, 416 residues long: MIQERADIEKAYASNLRKFAARLEMFLRTGVEYGTATNILSGLAKEAEDNAELHSNIAAGLINPVQLGIKNWQRENFHKSSISTSIKEVKNFDSEFENAQKTWYKHYKNVNRCKKEYFHACKTVRSLQVQVQNAKNEPFGTPEQQAQRGKELRKMEDKLRKGIMEEEKTRKAYEEAISSLSDVTPRYIEDMTQVFNKAQAFERERIVYFKEQALQMQAVLDISAKPNLSQIFVELRETVAKVDADADLKKWSLAYGVDMAPNFPVFQEYSPEMSALGKKGRSALADGSSGGVTLTSLKTFTSPDRGGPIPGTTDSGSNISTSPVHTTDYTSSVNGAAAAVSKEKQRVEDTPPYPDFVDDGRPGVPIRALYDYVGVEADELSFNSGDLFEKLEDEDEQGWCKGRKDGRVGLYPRQLR.

One can recognise an F-BAR domain in the interval 1–247 (MIQERADIEK…TVAKVDADAD (247 aa)). Residues 297 to 327 (LKTFTSPDRGGPIPGTTDSGSNISTSPVHTT) are disordered. Over residues 312–327 (TTDSGSNISTSPVHTT) the composition is skewed to polar residues. One can recognise an SH3 domain in the interval 361–416 (RPGVPIRALYDYVGVEADELSFNSGDLFEKLEDEDEQGWCKGRKDGRVGLYPRQLR).

The sequence is that of Antigen EG13 (EG13) from Echinococcus granulosus (Hydatid tapeworm).